Here is a 334-residue protein sequence, read N- to C-terminus: Uracil-DNA glycosylase (334 aa).

Basic residues predominate over residues 1 to 17 (MKRACSRSPSPRRRPSS). 2 disordered regions span residues 1–63 (MKRA…CRSS) and 79–104 (VTFSSSAPPDPPMDLTNGGVSPAATS). Polar residues predominate over residues 40 to 50 (GASNDASTETR). Catalysis depends on D178, which acts as the Proton acceptor.

Belongs to the uracil-DNA glycosylase (UDG) superfamily. UNG family.

It localises to the host nucleus. It carries out the reaction Hydrolyzes single-stranded DNA or mismatched double-stranded DNA and polynucleotides, releasing free uracil.. Excises uracil residues from the DNA which can arise as a result of misincorporation of dUMP residues by DNA polymerase or deamination of cytosines. Therefore may reduce deleterious uracil incorporation into the viral genome, particularly in terminally differentiated cells which lack DNA repair enzymes. This chain is Uracil-DNA glycosylase, found in Human herpesvirus 1 (strain 17) (HHV-1).